The primary structure comprises 113 residues: MIVWMGVYDQRSKGKITKSISDLPGIHSSYMDLKEGTLVVMGDVDPVELVRNLRKKWGKAKLTLYVPYDALKEAKIAEAKQKREEIEREALYRYNREIRDIFNDKEEQGCVIC.

The HMA domain maps to 1-65 (MIVWMGVYDQ…KWGKAKLTLY (65 aa)). Residues 69–89 (DALKEAKIAEAKQKREEIERE) adopt a coiled-coil conformation. At C110 the chain carries Cysteine methyl ester. C110 carries the S-farnesyl cysteine lipid modification. The propeptide at 111-113 (VIC) is removed in mature form.

This sequence belongs to the HIPP family. In terms of tissue distribution, expressed in embryo sacs.

In terms of biological role, probable heavy-metal-binding protein. The chain is Heavy metal-associated isoprenylated plant protein 15 from Arabidopsis thaliana (Mouse-ear cress).